The primary structure comprises 207 residues: Small ribosomal subunit protein uS4 (207 aa).

The tract at residues 31–54 (KCKLDSKPGQHGRTSGARTSDYGN) is disordered. The segment covering 42 to 53 (GRTSGARTSDYG) has biased composition (polar residues). Residues 97–160 (SRLDNVVYRM…KKQVRIAEAL (64 aa)) form the S4 RNA-binding domain.

The protein belongs to the universal ribosomal protein uS4 family. As to quaternary structure, part of the 30S ribosomal subunit. Contacts protein S5. The interaction surface between S4 and S5 is involved in control of translational fidelity.

In terms of biological role, one of the primary rRNA binding proteins, it binds directly to 16S rRNA where it nucleates assembly of the body of the 30S subunit. With S5 and S12 plays an important role in translational accuracy. This Cupriavidus metallidurans (strain ATCC 43123 / DSM 2839 / NBRC 102507 / CH34) (Ralstonia metallidurans) protein is Small ribosomal subunit protein uS4.